An 863-amino-acid polypeptide reads, in one-letter code: Chloride channel protein A (863 aa).

The Cytoplasmic segment spans residues 1–124 (MFRNNNNDNN…TSKLNHMLKT (124 aa)). Positions 48-78 (ENGLINNNNNSHNNNNGGNNNNHGPSKVTHR) are disordered. Over residues 49-71 (NGLINNNNNSHNNNNGGNNNNHG) the composition is skewed to low complexity. 7 consecutive transmembrane segments (helical) span residues 125–145 (FGKW…AYLV), 171–191 (IAFL…SLVI), 228–248 (LVSL…GPMI), 289–309 (GAAA…LFGF), 324–344 (TFFA…GFDM), 367–387 (LIPF…FVNL), and 408–428 (VLEV…CAAF). The interval 434–460 (KTQANGSQTNSLDTSSSSILSSSGDNS) is disordered. The segment covering 439-460 (GSQTNSLDTSSSSILSSSGDNS) has biased composition (low complexity). 3 helical membrane passes run 518-538 (IFTI…TTIT), 539-559 (SGLM…ATFG), and 561-581 (LVGQ…ALVG). 2 consecutive CBS domains span residues 661–742 (MKTE…CHEQ) and 816–863 (MNLS…KDLL).

Belongs to the chloride channel (TC 2.A.49) family.

The protein resides in the membrane. Its function is as follows. Voltage-gated chloride channel. Chloride channels may have several functions including the regulation of cell volume, membrane potential stabilization and signal transduction. In Dictyostelium discoideum (Social amoeba), this protein is Chloride channel protein A (clcA).